Consider the following 318-residue polypeptide: Geranylfarnesyl diphosphate synthase (318 aa).

Isopentenyl diphosphate contacts are provided by Lys-31, Arg-34, and His-65. Residues Asp-72 and Asp-76 each coordinate Mg(2+). Arg-81 serves as a coordination point for an all-trans-polyprenyl diphosphate. Arg-82 is an isopentenyl diphosphate binding site. An all-trans-polyprenyl diphosphate is bound by residues Lys-166, Thr-167, and Gln-204.

The protein belongs to the FPP/GGPP synthase family. In terms of assembly, homodimer. The cofactor is Mg(2+).

The catalysed reaction is isopentenyl diphosphate + (2E,6E,10E)-geranylgeranyl diphosphate = (2E,6E,10E,14E)-geranylfarnesyl diphosphate + diphosphate. Probably involved in biosynthesis of the precursor for C25 (sesterterpanyl chain) moiety of C25-C25 diether (2,3-di-O-sesterterpanyl-sn-glycero) membrane lipid. Catalyzes the condensation of isopentenyl pyrophosphate with the allylic pyrophosphates to yield all-trans geranylfarnesyl diphosphate (GFPP). Geranylgeranyl diphosphate (GGPP) is the preferred substrate, however methylallyl diphosphate (DMAPP), farnesyl diphosphate (FPP) and geranyl diphosphate (GPP) can also be used as allylic substrate. This Aeropyrum pernix protein is Geranylfarnesyl diphosphate synthase (fgs).